We begin with the raw amino-acid sequence, 362 residues long: MELTQPIRENGDPQGHQLTDPDAEVVSLSPRTLLESDRYVCEICNQGFQRDQNLQMHRRRHKVPWKLLKRDKKDEEVRKRVYVCPEPTCLHHDPCHALGDLVGIKKHFRRKHSVHKQWVCERCSKGYAVQSDYKAHLKTCGSRGHSCDCGRVFSRVESFIEHQDTCTIRQPQPTNHRHLQQHTMGLDAPSRTTSTASFGPLLHGLPLLRPPRPSNQHSPAFAYPFNASSAPFESLELQLSIGMARTSAQARHNEKRETSLTKERANEEARKAEETRQEAKRQIEMAEKDFEKAKRIREEAKTELEKAHVVREEAIKRINATMMEITCHSCKQLFQLPVTADESTSSLVMSYVSSATTEGECE.

The disordered stretch occupies residues 1–22 (MELTQPIRENGDPQGHQLTDPD). 2 consecutive C2H2-type zinc fingers follow at residues 39–61 (YVCEICNQGFQRDQNLQMHRRRH) and 82–112 (YVCPEPTCLHHDPCHALGDLVGIKKHFRRKH). The CCHC-type 1; atypical zinc finger occupies 118–142 (WVCERCSKGYAVQSDYKAHLKTCGS). Residues Cys-120, Cys-123, His-136, Cys-140, Cys-147, Cys-149, His-162, and Cys-166 each contribute to the Zn(2+) site. The CCHC-type 2; atypical zinc-finger motif lies at 145 to 168 (HSCDCGRVFSRVESFIEHQDTCTI). Positions 155-167 (RVESFIEHQDTCT) are SHR-binding. Residues 247 to 278 (SAQARHNEKRETSLTKERANEEARKAEETRQE) are disordered. The span at 251-278 (RHNEKRETSLTKERANEEARKAEETRQE) shows a compositional bias: basic and acidic residues. Residues 252–319 (HNEKRETSLT…VREEAIKRIN (68 aa)) are a coiled coil.

As to expression, highly expressed in leaves, hypocotyls, roots, vasculature of cotyledons, floral organs and in the endodermis and vasculaturenof inflorescence stems.

It is found in the nucleus. Its function is as follows. Transcription factor regulating lateral organ morphogenesis and gravitropic responses. Has a redundant role with IDD14 in directing leaf and floral organ morphogenesis. Acts cooperatively with IDD15 to control silique and branche orientation. Involved in the establishment of auxin gradients through the regulation of auxin biosynthesis and transport. The chain is Protein indeterminate-domain 16 from Arabidopsis thaliana (Mouse-ear cress).